The chain runs to 392 residues: Succinate--CoA ligase [ADP-forming] subunit beta (392 aa).

The 240-residue stretch at 9-248 folds into the ATP-grasp domain; that stretch reads KDILRKFGVA…TNEEDPFEVE (240 aa). ATP is bound by residues Lys50, 57–59, Glu103, Met106, and Glu111; that span reads GRG. Residues Asn203 and Asp217 each coordinate Mg(2+). Substrate is bound by residues Asn268 and 325 to 327; that span reads GIV.

This sequence belongs to the succinate/malate CoA ligase beta subunit family. In terms of assembly, heterotetramer of two alpha and two beta subunits. Mg(2+) is required as a cofactor.

It carries out the reaction succinate + ATP + CoA = succinyl-CoA + ADP + phosphate. The enzyme catalyses GTP + succinate + CoA = succinyl-CoA + GDP + phosphate. Its pathway is carbohydrate metabolism; tricarboxylic acid cycle; succinate from succinyl-CoA (ligase route): step 1/1. In terms of biological role, succinyl-CoA synthetase functions in the citric acid cycle (TCA), coupling the hydrolysis of succinyl-CoA to the synthesis of either ATP or GTP and thus represents the only step of substrate-level phosphorylation in the TCA. The beta subunit provides nucleotide specificity of the enzyme and binds the substrate succinate, while the binding sites for coenzyme A and phosphate are found in the alpha subunit. The chain is Succinate--CoA ligase [ADP-forming] subunit beta from Pelodictyon phaeoclathratiforme (strain DSM 5477 / BU-1).